The primary structure comprises 212 residues: Glycerol-3-phosphate acyltransferase (212 aa).

5 helical membrane-spanning segments follow: residues 5-25 (ALGM…ILVC), 53-73 (VAAA…VWLA), 80-100 (PLYL…PVFF), 112-132 (FGAI…TWLL), and 138-158 (GYSS…VWWF).

This sequence belongs to the PlsY family. As to quaternary structure, probably interacts with PlsX.

It localises to the cell inner membrane. It catalyses the reaction an acyl phosphate + sn-glycerol 3-phosphate = a 1-acyl-sn-glycero-3-phosphate + phosphate. The protein operates within lipid metabolism; phospholipid metabolism. Catalyzes the transfer of an acyl group from acyl-phosphate (acyl-PO(4)) to glycerol-3-phosphate (G3P) to form lysophosphatidic acid (LPA). This enzyme utilizes acyl-phosphate as fatty acyl donor, but not acyl-CoA or acyl-ACP. This is Glycerol-3-phosphate acyltransferase from Serratia proteamaculans (strain 568).